A 371-amino-acid polypeptide reads, in one-letter code: S-adenosylmethionine:tRNA ribosyltransferase-isomerase (371 aa).

The protein belongs to the QueA family. In terms of assembly, monomer.

It localises to the cytoplasm. It catalyses the reaction 7-aminomethyl-7-carbaguanosine(34) in tRNA + S-adenosyl-L-methionine = epoxyqueuosine(34) in tRNA + adenine + L-methionine + 2 H(+). It functions in the pathway tRNA modification; tRNA-queuosine biosynthesis. Transfers and isomerizes the ribose moiety from AdoMet to the 7-aminomethyl group of 7-deazaguanine (preQ1-tRNA) to give epoxyqueuosine (oQ-tRNA). This chain is S-adenosylmethionine:tRNA ribosyltransferase-isomerase, found in Rickettsia akari (strain Hartford).